Reading from the N-terminus, the 435-residue chain is Xylose isomerase (435 aa).

Catalysis depends on residues His99 and Asp102. The Mg(2+) site is built by Glu230, Glu266, His269, Asp294, Asp305, Asp307, and Asp337.

This sequence belongs to the xylose isomerase family. In terms of assembly, homotetramer. Mg(2+) is required as a cofactor.

It localises to the cytoplasm. It carries out the reaction alpha-D-xylose = alpha-D-xylulofuranose. The chain is Xylose isomerase from Enterococcus faecalis (strain ATCC 700802 / V583).